Consider the following 111-residue polypeptide: MPPLSESEFLALAGKELDRIEAAVEAAADAADADIEISRTGNVMELEFENGSKIIINSQAPMQELWVAARSGGFHFRRDGERWVDTRSGDELYAALSAYVSQQAEAALKLG.

This sequence belongs to the frataxin family.

Involved in iron-sulfur (Fe-S) cluster assembly. May act as a regulator of Fe-S biogenesis. The polypeptide is Iron-sulfur cluster assembly protein CyaY (Cupriavidus pinatubonensis (strain JMP 134 / LMG 1197) (Cupriavidus necator (strain JMP 134))).